The chain runs to 344 residues: 1-acyl-sn-glycerol-3-phosphate acyltransferase BAT2, chloroplastic (344 aa).

A chloroplast-targeting transit peptide spans Met1 to His49. The chain crosses the membrane as a helical span at residues Gly113 to Thr133. An HXXXXD motif motif is present at residues His188 to Asp193. A helical transmembrane segment spans residues Thr210–Leu230.

It belongs to the 1-acyl-sn-glycerol-3-phosphate acyltransferase family. Widely expressed.

It is found in the plastid. The protein localises to the chloroplast membrane. The catalysed reaction is a fatty acyl-[ACP] + a 1-acyl-sn-glycero-3-phosphate = a 1,2-diacyl-sn-glycero-3-phosphate + holo-[ACP]. It catalyses the reaction a 1-acyl-sn-glycero-3-phosphate + an acyl-CoA = a 1,2-diacyl-sn-glycero-3-phosphate + CoA. The protein operates within phospholipid metabolism; CDP-diacylglycerol biosynthesis; CDP-diacylglycerol from sn-glycerol 3-phosphate: step 2/3. Its function is as follows. Plastidial enzyme of the prokaryotic glycerol-3-phosphate pathway that converts lysophosphatidic acid (LPA) into phosphatidic acid by incorporating an acyl moiety at position sn-2. Utilizes palmitoyl-ACP (16:0-ACP) to produce phosphatidic acid containing a saturated group at position sn-2, which is characteristic of lipids synthesized by the prokaryotic pathway. In vitro, can use 16:0-CoA as acyl donor. The chain is 1-acyl-sn-glycerol-3-phosphate acyltransferase BAT2, chloroplastic from Brassica napus (Rape).